The chain runs to 245 residues: Small ribosomal subunit protein uS2 (245 aa).

The interval 226–245 is disordered; the sequence is GGGANVGEMENPPVEATADA.

Belongs to the universal ribosomal protein uS2 family.

The protein is Small ribosomal subunit protein uS2 of Erythrobacter litoralis (strain HTCC2594).